We begin with the raw amino-acid sequence, 368 residues long: 1-deoxy-D-xylulose 5-phosphate reductoisomerase (368 aa).

Residues T7, G8, S9, I10, G31, K32, N33, and N113 each contribute to the NADPH site. 1-deoxy-D-xylulose 5-phosphate is bound at residue K114. E115 is an NADPH binding site. D133 is a Mn(2+) binding site. 4 residues coordinate 1-deoxy-D-xylulose 5-phosphate: S134, E135, S158, and H181. Residue E135 coordinates Mn(2+). An NADPH-binding site is contributed by G187. 4 residues coordinate 1-deoxy-D-xylulose 5-phosphate: S194, N199, K200, and E203. Residue E203 coordinates Mn(2+).

It belongs to the DXR family. It depends on Mg(2+) as a cofactor. Mn(2+) serves as cofactor.

The catalysed reaction is 2-C-methyl-D-erythritol 4-phosphate + NADP(+) = 1-deoxy-D-xylulose 5-phosphate + NADPH + H(+). It participates in isoprenoid biosynthesis; isopentenyl diphosphate biosynthesis via DXP pathway; isopentenyl diphosphate from 1-deoxy-D-xylulose 5-phosphate: step 1/6. Its function is as follows. Catalyzes the NADPH-dependent rearrangement and reduction of 1-deoxy-D-xylulose-5-phosphate (DXP) to 2-C-methyl-D-erythritol 4-phosphate (MEP). The protein is 1-deoxy-D-xylulose 5-phosphate reductoisomerase of Helicobacter pylori (strain HPAG1).